A 330-amino-acid chain; its full sequence is 4-hydroxythreonine-4-phosphate dehydrogenase (330 aa).

Substrate is bound at residue threonine 133. Positions 161, 206, and 261 each coordinate a divalent metal cation. Lysine 269, asparagine 278, and arginine 287 together coordinate substrate.

Belongs to the PdxA family. In terms of assembly, homodimer. Requires Zn(2+) as cofactor. The cofactor is Mg(2+). Co(2+) is required as a cofactor.

It localises to the cytoplasm. It carries out the reaction 4-(phosphooxy)-L-threonine + NAD(+) = 3-amino-2-oxopropyl phosphate + CO2 + NADH. Its pathway is cofactor biosynthesis; pyridoxine 5'-phosphate biosynthesis; pyridoxine 5'-phosphate from D-erythrose 4-phosphate: step 4/5. In terms of biological role, catalyzes the NAD(P)-dependent oxidation of 4-(phosphooxy)-L-threonine (HTP) into 2-amino-3-oxo-4-(phosphooxy)butyric acid which spontaneously decarboxylates to form 3-amino-2-oxopropyl phosphate (AHAP). In Xylella fastidiosa (strain 9a5c), this protein is 4-hydroxythreonine-4-phosphate dehydrogenase.